The following is a 324-amino-acid chain: E3 ubiquitin-protein ligase SIAH2 (324 aa).

Residues 1 to 15 show a composition bias toward polar residues; sequence MSRPSSTGPSANKPC. The disordered stretch occupies residues 1–42; the sequence is MSRPSSTGPSANKPCSKQPPPQPQHTPSPAAPPAAATISAAG. Ser-6 carries the post-translational modification Phosphoserine. At Ser-16 the chain carries Phosphoserine; by DYRK2. Positions 17 to 32 are enriched in pro residues; that stretch reads KQPPPQPQHTPSPAAP. Thr-26 carries the post-translational modification Phosphothreonine; by DYRK2. A Phosphoserine; by DYRK2 and MAPK14 modification is found at Ser-28. Residues 33-42 show a composition bias toward low complexity; the sequence is PAAATISAAG. At Ser-68 the chain carries Phosphoserine; by DYRK2. The segment at 80 to 115 adopts an RING-type zinc-finger fold; the sequence is CPVCFDYVLPPILQCQAGHLVCNQCRQKLSCCPTCR. At Thr-119 the chain carries Phosphothreonine; by DYRK2. Residues 130–322 are SBD; that stretch reads VASAVLFPCK…LGINVTISTC (193 aa). The SIAH-type zinc finger occupies 133–193; sequence AVLFPCKYAT…VMSHLMHAHK (61 aa). Residues Cys-138, Cys-145, His-157, Cys-161, Cys-168, Cys-175, His-187, and His-192 each coordinate Zn(2+).

Belongs to the SINA (Seven in absentia) family. As to quaternary structure, homodimer. Interacts with UBE2E2. Interacts with PEG3. Interacts with VAV1, without mediating its ubiquitin-mediated degradation. Interacts with CACYBP/SIP. Probable component of some large E3 complex possibly composed of UBE2D1, SIAH2, CACYBP/SIP, SKP1, APC and TBL1X. Interacts with PEG10, which may inhibit its activity. Interacts with EGLN2 and SNCAIP. Interacts with DYRK2. Interacts with NR1D1 and NR1D2. Interacts with DCC. Interacts with AXIN1. Phosphorylated at Ser-28 by MAPK14, which mediates the degradation by the proteasome of EGLN3. Phosphorylated at Ser-28 by DYRK2; this increases the ubiquitin ligase activity and promotes degradation of EGLN3. As to expression, widely expressed at low level.

The protein resides in the cytoplasm. It is found in the nucleus. The catalysed reaction is S-ubiquitinyl-[E2 ubiquitin-conjugating enzyme]-L-cysteine + [acceptor protein]-L-lysine = [E2 ubiquitin-conjugating enzyme]-L-cysteine + N(6)-ubiquitinyl-[acceptor protein]-L-lysine.. It participates in protein modification; protein ubiquitination. Its activity is regulated as follows. Inhibited by interaction with SNCAIP (isoform 2, but not isoform 1). May be inhibited by interaction with PEG10. In terms of biological role, E3 ubiquitin-protein ligase that mediates ubiquitination and subsequent proteasomal degradation of target proteins. E3 ubiquitin ligases accept ubiquitin from an E2 ubiquitin-conjugating enzyme in the form of a thioester and then directly transfers the ubiquitin to targeted substrates. Mediates E3 ubiquitin ligase activity either through direct binding to substrates or by functioning as the essential RING domain subunit of larger E3 complexes. Triggers the ubiquitin-mediated degradation of many substrates, including proteins involved in transcription regulation (GPS2, POU2AF1, PML, NCOR1), a cell surface receptor (DCC), an antiapoptotic protein (BAG1), and a protein involved in synaptic vesicle function in neurons (SYP). Mediates ubiquitination and proteasomal degradation of DYRK2 in response to hypoxia. It is thereby involved in apoptosis, tumor suppression, cell cycle, transcription and signaling processes. Has some overlapping function with SIAH1. Triggers the ubiquitin-mediated degradation of TRAF2, whereas SIAH1 does not. Promotes monoubiquitination of SNCA. Regulates cellular clock function via ubiquitination of the circadian transcriptional repressors NR1D1 and NR1D2 leading to their proteasomal degradation. Plays an important role in mediating the rhythmic degradation/clearance of NR1D1 and NR1D2 contributing to their circadian profile of protein abundance. Mediates ubiquitination and degradation of EGLN2 and EGLN3 in response to the unfolded protein response (UPR), leading to their degradation and subsequent stabilization of ATF4. Also part of the Wnt signaling pathway in which it mediates the Wnt-induced ubiquitin-mediated proteasomal degradation of AXIN1. This is E3 ubiquitin-protein ligase SIAH2 (SIAH2) from Homo sapiens (Human).